A 281-amino-acid polypeptide reads, in one-letter code: ATP synthase subunit a (281 aa).

Transmembrane regions (helical) follow at residues 56–76 (KPML…WAAF), 117–137 (LVVS…IPVA), 144–164 (IIAY…TLTF), 181–201 (KSLG…NILI), 215–235 (FAGH…LNGV), 237–257 (IAYA…ELFI), and 259–279 (ALQA…AMAE).

Belongs to the ATPase A chain family. In terms of assembly, F-type ATPases have 2 components, CF(1) - the catalytic core - and CF(0) - the membrane proton channel. CF(1) has five subunits: alpha(3), beta(3), gamma(1), delta(1), epsilon(1). CF(0) has three main subunits: a(1), b(2) and c(9-12). The alpha and beta chains form an alternating ring which encloses part of the gamma chain. CF(1) is attached to CF(0) by a central stalk formed by the gamma and epsilon chains, while a peripheral stalk is formed by the delta and b chains.

It localises to the cell membrane. Functionally, key component of the proton channel; it plays a direct role in the translocation of protons across the membrane. In Streptomyces lividans, this protein is ATP synthase subunit a.